We begin with the raw amino-acid sequence, 234 residues long: Leucyl/phenylalanyl-tRNA--protein transferase (234 aa).

It belongs to the L/F-transferase family.

It is found in the cytoplasm. The catalysed reaction is N-terminal L-lysyl-[protein] + L-leucyl-tRNA(Leu) = N-terminal L-leucyl-L-lysyl-[protein] + tRNA(Leu) + H(+). It carries out the reaction N-terminal L-arginyl-[protein] + L-leucyl-tRNA(Leu) = N-terminal L-leucyl-L-arginyl-[protein] + tRNA(Leu) + H(+). The enzyme catalyses L-phenylalanyl-tRNA(Phe) + an N-terminal L-alpha-aminoacyl-[protein] = an N-terminal L-phenylalanyl-L-alpha-aminoacyl-[protein] + tRNA(Phe). Functionally, functions in the N-end rule pathway of protein degradation where it conjugates Leu, Phe and, less efficiently, Met from aminoacyl-tRNAs to the N-termini of proteins containing an N-terminal arginine or lysine. This is Leucyl/phenylalanyl-tRNA--protein transferase from Salmonella paratyphi A (strain ATCC 9150 / SARB42).